Consider the following 488-residue polypeptide: Histone deacetylase 2 (488 aa).

The histone deacetylase stretch occupies residues 9–322 (KKKVCYYYDG…WTYETAVALD (314 aa)). The 1D-myo-inositol 1,4,5,6-tetrakisphosphate site is built by G28 and K32. N6-acetyllysine; alternate is present on K75. K75 is covalently cross-linked (Glycyl lysine isopeptide (Lys-Gly) (interchain with G-Cter in SUMO2); alternate). H142 is a catalytic residue. D175, D177, H179, F188, T191, V194, S198, and F199 together coordinate Ca(2+). Positions 177 and 179 each coordinate Zn(2+). K221 carries the N6-acetyllysine modification. A Ca(2+)-binding site is contributed by Y223. An S-nitrosocysteine modification is found at C262. D265 is a Zn(2+) binding site. R271 is a 1D-myo-inositol 1,4,5,6-tetrakisphosphate binding site. Position 274 is an S-nitrosocysteine (C274). Positions 389–488 (AVHEDSGDED…GAKSEQLSNP (100 aa)) are disordered. Phosphoserine occurs at positions 394, 407, 422, and 424. A compositionally biased stretch (basic and acidic residues) spans 402-417 (PDKRISIRASDKRIAC). Over residues 418–428 (DEEFSDSEDEG) the composition is skewed to acidic residues. The span at 429–481 (EGGRRNVADHKKGAKKARIEEDKKETEDKKTDVKEEDKSKDNSGEKTDPKGAK) shows a compositional bias: basic and acidic residues. Residues K439, K452, K458, K462, K478, and K481 each participate in a glycyl lysine isopeptide (Lys-Gly) (interchain with G-Cter in SUMO2) cross-link.

This sequence belongs to the histone deacetylase family. HD type 1 subfamily. As to quaternary structure, part of the core histone deacetylase (HDAC) complex composed of HDAC1, HDAC2, RBBP4 and RBBP7, the core complex associates with SIN3, SAP18 and SAP30 to form the SIN3 HDAC complex. Component of the nucleosome remodeling and deacetylase (NuRD) repressor complex, composed of core proteins MTA1, MTA2, MTA3, RBBP4, RBBP7, HDAC1, HDAC2, MBD2, MBD3, and peripherally associated proteins CDK2AP1, CDK2AP2, GATAD2A, GATAD2B, CHD3, CHD4 and CHD5. The exact stoichiometry of the NuRD complex is unknown, and some subunits such as MBD2 and MBD3, GATAD2A and GATAD2B, and CHD3, CHD4 and CHD5 define mutually exclusive NuRD complexes. Component of a RCOR/GFI/KDM1A/HDAC complex. Component of a BHC histone deacetylase complex that contains HDAC1, HDAC2, HMG20B, KDM1A, RCOR1 and PHF21A. The BHC complex may also contain ZMYM2, ZNF217, ZMYM3, GSE1 and GTF2I. Part of a complex containing the core histones H2A, H2B, H3 and H4, DEK and unphosphorylated DAXX. Part of a complex containing ATR and CHD4. Forms a heterologous complex at least with YY1. Interacts in the late S-phase of DNA-replication with DNMT1 in the other transcriptional repressor complex composed of DNMT1, DMAP1, PCNA, CAF1. Component of a mSin3A corepressor complex that contains SIN3A, SAP130, SUDS3, ARID4B, HDAC1 and HDAC2. Part of a complex composed of TRIM28, HDAC1, HDAC2 and EHMT2. Part of a complex containing at least CDYL, MIER1, MIER2, HDAC1 and HDAC2. Component of a histone deacetylase complex containing DNTTIP1, ZNF541, HDAC1 and HDAC2. Forms a complex comprising APPL1, RUVBL2, APPL2, CTNNB1 and HDAC1. Interacts directly with GFI1. Interacts directly with GFI1B. Interacts with APEX1; the interaction is not dependent on the acetylated status of APEX1. Interacts with ATR. Interacts with BCL6 (non-acetylated form). Interacts with BEND3. Interacts with CBFA2T3. Interacts with CDK2AP1. Interacts with CHD4. Interacts with CHD5. Interacts with CHFR. Interacts with CRY1. Interacts with DNMT1. Interacts with GATAD2A. Interacts with HCFC1. Interacts with HDAC7. Interacts with HDAC10. Interacts with INSM1. Interacts with KDM4A. Interacts with MACROH2A1 (via the non-histone region). Interacts with MBD3L2. Interacts with MTA1, with a preference for sumoylated MTA1. Interacts with NACC2. Interacts with NRIP1. Interacts with PELP1. Interacts with PIMREG. Interacts with PRDM6. Interacts with PWWP2B Interacts with SAP30. Interacts with SAP30L. Interacts with SETDB1. Interacts with SIX3. Interacts with SMARCAD1. Interacts with SNW1. Interacts with SPHK2. Interacts with SPEN/MINT. Interacts (CK2 phosphorylated form) with SP3. Interacts with SUV39H1. Interacts with TSHZ3 (via its N-terminus). Interacts with ZMYND8. Interacts with ZNF431. Interacts with ZNF263; recruited to the SIX3 promoter along with other proteins involved in chromatin modification and transcriptional corepression where it contributes to transcriptional repression. Identified in a complex with HDAC1, KCTD19, DNTTIP1 and ZNF541. Component of the SIN3B complex, which includes SIN3B, HDAC2, PHF12 and MORF4L1; interacts directly with all subunits. It depends on Zn(2+) as a cofactor. Ca(2+) is required as a cofactor. Post-translationally, S-nitrosylated by GAPDH. In neurons, S-nitrosylation at Cys-262 and Cys-274 does not affect enzyme activity, but induces HDAC2 release from chromatin. This in turn increases acetylation of histones surrounding neurotrophin-dependent gene promoters and promotes their transcription. In embryonic cortical neurons, S-Nitrosylation regulates dendritic growth and branching.

The protein resides in the nucleus. Its subcellular location is the cytoplasm. It catalyses the reaction N(6)-acetyl-L-lysyl-[histone] + H2O = L-lysyl-[histone] + acetate. The catalysed reaction is N(6)-acetyl-L-lysyl-[protein] + H2O = L-lysyl-[protein] + acetate. It carries out the reaction N(6)-(2E)-butenoyl-L-lysyl-[protein] + H2O = (2E)-2-butenoate + L-lysyl-[protein]. The enzyme catalyses N(6)-(2-hydroxyisobutanoyl)-L-lysyl-[protein] + H2O = 2-hydroxy-2-methylpropanoate + L-lysyl-[protein]. It catalyses the reaction N(6)-[(S)-lactoyl]-L-lysyl-[protein] + H2O = (S)-lactate + L-lysyl-[protein]. With respect to regulation, inositol tetraphosphate (1D-myo-inositol 1,4,5,6-tetrakisphosphate) may act as an intermolecular glue between HDAC2 and N-Cor repressor complex components. Functionally, histone deacetylase that catalyzes the deacetylation of lysine residues on the N-terminal part of the core histones (H2A, H2B, H3 and H4). Histone deacetylation gives a tag for epigenetic repression and plays an important role in transcriptional regulation, cell cycle progression and developmental events. Histone deacetylases act via the formation of large multiprotein complexes. Forms transcriptional repressor complexes by associating with MAD, SIN3, YY1 and N-COR. Component of a RCOR/GFI/KDM1A/HDAC complex that suppresses, via histone deacetylase (HDAC) recruitment, a number of genes implicated in multilineage blood cell development. Acts as a component of the histone deacetylase NuRD complex which participates in the remodeling of chromatin. Component of the SIN3B complex that represses transcription and counteracts the histone acetyltransferase activity of EP300 through the recognition H3K27ac marks by PHF12 and the activity of the histone deacetylase HDAC2. Also deacetylates non-histone targets: deacetylates TSHZ3, thereby regulating its transcriptional repressor activity. May be involved in the transcriptional repression of circadian target genes, such as PER1, mediated by CRY1 through histone deacetylation. Involved in MTA1-mediated transcriptional corepression of TFF1 and CDKN1A. In addition to protein deacetylase activity, also acts as a protein-lysine deacylase by recognizing other acyl groups: catalyzes removal of (2E)-butenoyl (crotonyl), lactoyl (lactyl) and 2-hydroxyisobutanoyl (2-hydroxyisobutyryl) acyl groups from lysine residues, leading to protein decrotonylation, delactylation and de-2-hydroxyisobutyrylation, respectively. This chain is Histone deacetylase 2, found in Mus musculus (Mouse).